Reading from the N-terminus, the 136-residue chain is Large ribosomal subunit protein uL16 (136 aa).

It belongs to the universal ribosomal protein uL16 family. Part of the 50S ribosomal subunit.

Its function is as follows. Binds 23S rRNA and is also seen to make contacts with the A and possibly P site tRNAs. This is Large ribosomal subunit protein uL16 from Edwardsiella ictaluri (strain 93-146).